Consider the following 142-residue polypeptide: Nucleoside diphosphate kinase (142 aa).

Residues lysine 9, phenylalanine 57, arginine 85, threonine 91, arginine 102, and asparagine 112 each coordinate ATP. The active-site Pros-phosphohistidine intermediate is the histidine 115.

Belongs to the NDK family. As to quaternary structure, homotetramer. Mg(2+) is required as a cofactor.

It localises to the cytoplasm. It carries out the reaction a 2'-deoxyribonucleoside 5'-diphosphate + ATP = a 2'-deoxyribonucleoside 5'-triphosphate + ADP. The catalysed reaction is a ribonucleoside 5'-diphosphate + ATP = a ribonucleoside 5'-triphosphate + ADP. In terms of biological role, major role in the synthesis of nucleoside triphosphates other than ATP. The ATP gamma phosphate is transferred to the NDP beta phosphate via a ping-pong mechanism, using a phosphorylated active-site intermediate. This Dehalococcoides mccartyi (strain ATCC BAA-2100 / JCM 16839 / KCTC 5957 / BAV1) protein is Nucleoside diphosphate kinase.